A 370-amino-acid polypeptide reads, in one-letter code: Peptidyl-prolyl cis-trans isomerase D (370 aa).

Positions 11-176 (FFDISADGKP…EDWIISDCGE (166 aa)) constitute a PPIase cyclophilin-type domain. TPR repeat units follow at residues 218-251 (VTTL…LNDY), 269-302 (LSCY…EAID), and 307-340 (TKAL…SPED).

It belongs to the cyclophilin-type PPIase family. PPIase D subfamily.

The protein localises to the cytoplasm. It catalyses the reaction [protein]-peptidylproline (omega=180) = [protein]-peptidylproline (omega=0). Functionally, PPIases accelerate the folding of proteins. It catalyzes the cis-trans isomerization of proline imidic peptide bonds in oligopeptides. In Debaryomyces hansenii (strain ATCC 36239 / CBS 767 / BCRC 21394 / JCM 1990 / NBRC 0083 / IGC 2968) (Yeast), this protein is Peptidyl-prolyl cis-trans isomerase D (CPR6).